Here is a 338-residue protein sequence, read N- to C-terminus: Acyl-CoA:acyl-CoA alkyltransferase (338 aa).

Residues H18 and D56 each coordinate Mn(2+). E97 (proton acceptor) is an active-site residue. The active-site Acyl-thioester intermediate is the C123.

It belongs to the thiolase-like superfamily. OleA family. As to quaternary structure, homodimer. Weakly associates with the OleBCD complex.

It is found in the cytoplasm. It catalyses the reaction a 1,2-saturated acyl-CoA + an acyl-CoA + H2O = an (R)-2-alkyl-3-oxoalkanoate + 2 CoA + H(+). With respect to regulation, inhibited by cerulenin. Involved in olefin biosynthesis. Catalyzes a non-decarboxylative head-to-head Claisen condensation of two acyl-CoA molecules, generating an (R)-2-alkyl-3-oxoalkanoate. Is active with fatty acyl-CoA substrates that ranged from C(8) to C(16) in length, and is the most active with palmitoyl-CoA and myristoyl-CoA. The protein is Acyl-CoA:acyl-CoA alkyltransferase of Xanthomonas campestris pv. campestris (strain ATCC 33913 / DSM 3586 / NCPPB 528 / LMG 568 / P 25).